Consider the following 347-residue polypeptide: Endophilin-A3 (347 aa).

Positions 1-21 are membrane-binding amphipathic helix; sequence MSVAGLKKQFHKASQLFSEKI. In terms of domain architecture, BAR spans 18 to 249; that stretch reads SEKISGAEGT…LQMRISAASS (232 aa). Positions 60–87 are required for dimerization upon membrane association; the sequence is PNPAYRAKLGMLNTVSKIRGQVKTTGYP. A coiled-coil region spans residues 181 to 201; the sequence is EEVRQAVEKFEESKELAERSM. Residues 218-254 form an interaction with ARC region; sequence FIEAALDYHRQSTEILQELQSKLQMRISAASSVPRRE. Residues 248–271 form a disordered region; the sequence is SSVPRREYKPRPVKRSSSELNGVS. Residue Ser265 is modified to Phosphoserine. In terms of domain architecture, SH3 spans 285–344; sequence MDQPCCRGLYDFEPENQGELGFKEGDIITLTNQIDENWYEGMIHGESGFFPINYVEVIVP.

The protein belongs to the endophilin family. Interacts with ARC. Interacts with DNM1, SGIP1 and SYNJ1. Interacts with the huntingtin exon 1 protein (HDEX1P) containing a glutamine repeat in the pathological range and promotes formation of insoluble polyglutamine-containing aggregates in vivo. Interacts with DYDC1. Interacts with FASLG. Interacts with ATXN2. Interacts with BIN2. As to expression, brain and testis.

It is found in the cytoplasm. The protein resides in the early endosome membrane. Functionally, implicated in endocytosis. May recruit other proteins to membranes with high curvature. The protein is Endophilin-A3 (SH3GL3) of Homo sapiens (Human).